We begin with the raw amino-acid sequence, 585 residues long: MTITYTSQVANARLGSFSRLLLCWRGSIYKLLYGEFFIFLLCYYIIRFIYRLALTEEQQLMFEKLTLYCDSYIQLIPISFVLGFYVTLVVTRWWNQYENLPWPDRLMSLVSGFVEGKDEQGRLLRRTLIRYANLGNVLILRSVSTAVYKRFPSAQHLVQAGFMTPAEHKQLEKLSLPHNMFWVPWVWFANLSMKAWLGGRIRDPILLQSLLNEMNTLRTQCGHLYAYDWISIPLVYTQVVTVAVYSFFLTCLVGRQFLNPAKAYPGHELDLVVPVFTFLQFFFYVGWLKVAEQLINPFGEDDDDFETNWIVDRNLQVSLLAVDEMHQDLPRMEPDMYWNEPEPHPPYTAASAQFRRASFMGSTFNISLNKEEMEFQPNQEDKEDAHTGIIGRFLGLQSHDHHPPGANSRTKLLWPKRESLLHEGLPKNHKAVKQNVRGLEDNKAWKLKAVDAFKSAPLYQRPGYYSAPQTPLSPTPMFFPPEPSVLSKLHSVTGIDTKDKSLKTVSSGAKNSSELLSGSDGALMEHPEVSHVRRKTVEFNLTDMPEIPENHLKEPLELSTTNIHATLKDHVDPYWALENRDEAHS.

Residues 1-31 are Cytoplasmic-facing; that stretch reads MTITYTSQVANARLGSFSRLLLCWRGSIYKL. Position 10 (Ala10) interacts with Ca(2+). Residues 32–51 form a helical membrane-spanning segment; it reads LYGEFFIFLLCYYIIRFIYR. Topologically, residues 52 to 60 are extracellular; the sequence is LALTEEQQL. A helical membrane pass occupies residues 61-82; sequence MFEKLTLYCDSYIQLIPISFVL. The Cytoplasmic segment spans residues 83 to 237; that stretch reads GFYVTLVVTR…DWISIPLVYT (155 aa). The helical transmembrane segment at 238–255 threads the bilayer; sequence QVVTVAVYSFFLTCLVGR. Residues 256–274 are Extracellular-facing; the sequence is QFLNPAKAYPGHELDLVVP. A helical transmembrane segment spans residues 275 to 288; that stretch reads VFTFLQFFFYVGWL. Topologically, residues 289–585 are cytoplasmic; that stretch reads KVAEQLINPF…ALENRDEAHS (297 aa). Residues Gln293, Asn296, Asp301, and Asp304 each contribute to the Ca(2+) site. Positions 346–379 are auto-inhibitory segment; sequence PYTAASAQFRRASFMGSTFNISLNKEEMEFQPNQ.

Belongs to the anion channel-forming bestrophin (TC 1.A.46) family. Calcium-sensitive chloride channel subfamily. As to quaternary structure, interacts with YWHAG; this interaction promotes the ligand-gated L-glutamate channel activity leading to the positive regulation of NMDA glutamate receptor activity through the L-glutamate secretion.

It localises to the cell membrane. The protein resides in the basolateral cell membrane. It catalyses the reaction chloride(in) = chloride(out). It carries out the reaction hydrogencarbonate(in) = hydrogencarbonate(out). The enzyme catalyses 4-aminobutanoate(in) = 4-aminobutanoate(out). The catalysed reaction is L-glutamate(out) = L-glutamate(in). In terms of biological role, ligand-gated anion channel that allows the movement of anions across cell membranes when activated by calcium (Ca2+). Allows the movement of chloride and hydrogencarbonate. Found in a partially open conformation leading to significantly smaller chloride movement. Upon F2R/PAR-1 activation, the sequestered calcium is released into the cytosol of astrocytes, leading to the (Ca2+)-dependent release of L-glutamate into the synaptic cleft that targets the neuronal postsynaptic GRIN2A/NMDAR receptor resulting in the synaptic plasticity regulation. Upon activation of the norepinephrine-alpha-1 adrenergic receptor signaling pathway, transports as well D-serine than L-glutamate in a (Ca2+)-dependent manner, leading to activation of adjacent NMDAR receptors and therefore regulates the heterosynaptic long-term depression and metaplasticity during initial memory acquisition. Releases the 4-aminobutanoate neurotransmitter in a (Ca2+)-dependent manner, and participates in its tonic release from cerebellar glial cells. The protein is Bestrophin-1 (BEST1) of Macaca fascicularis (Crab-eating macaque).